The chain runs to 397 residues: Small ribosomal subunit protein mS29 (397 aa).

Residues 1 to 17 (MLKGMTRLVSRVHKLDP) constitute a mitochondrion transit peptide. Residues Lys-174 and Lys-206 each carry the N6-acetyllysine modification.

The protein belongs to the mitochondrion-specific ribosomal protein mS29 family. Component of the mitochondrial ribosome small subunit (28S) which comprises a 12S rRNA and about 30 distinct proteins. Interacts with DELE1. Interacts with NOA1.

The protein localises to the mitochondrion. It catalyses the reaction GTP + H2O = GDP + phosphate + H(+). Its function is as follows. As a component of the mitochondrial small ribosomal subunit, it plays a role in the translation of mitochondrial mRNAs. Involved in mediating interferon-gamma-induced cell death. Displays GTPase activity in vitro. The sequence is that of Small ribosomal subunit protein mS29 from Bos taurus (Bovine).